We begin with the raw amino-acid sequence, 179 residues long: ADP-ribosylation factor-like protein 5A (179 aa).

Residue G2 is the site of N-myristoyl glycine attachment. Residues 23-30 (GLDNAGKT), 66-70 (DIGGQ), 125-128 (NKQD), and A159 each bind GTP.

It belongs to the small GTPase superfamily. Arf family.

Functionally, lacks ADP-ribosylation enhancing activity. The polypeptide is ADP-ribosylation factor-like protein 5A (ARL5A) (Homo sapiens (Human)).